We begin with the raw amino-acid sequence, 154 residues long: Phospholipase A2 OS1 (154 aa).

Positions 1–27 (MHPAHLLVLLAVCVSLLGAARIPPLPL) are cleaved as a signal peptide. Intrachain disulfides connect Cys38–Cys104, Cys54–Cys153, Cys56–Cys72, Cys71–Cys132, Cys78–Cys125, Cys88–Cys118, and Cys111–Cys123. Ca(2+) contacts are provided by Gly57 and Gly59. His75 is a catalytic residue. Asp76 provides a ligand contact to Ca(2+). Asp126 is an active-site residue.

The protein belongs to the phospholipase A2 family. Group I subfamily. D49 sub-subfamily. As to quaternary structure, monomer. Ca(2+) is required as a cofactor. Expressed by the venom gland.

The protein localises to the secreted. It catalyses the reaction a 1,2-diacyl-sn-glycero-3-phosphocholine + H2O = a 1-acyl-sn-glycero-3-phosphocholine + a fatty acid + H(+). Snake venom phospholipase A2 (PLA2) that has a low specific activity on phospholipid substrates, and is neither neurotoxic, nor myotoxic. Induces endothelial cell migration which is mediated, at least in part, by its hydrolytic products. Shows antimalarial activity, but is not able to potently inhibit HIV-1 replication. Binds in a calcium-independent fashion with very high affinity to a muscle-type (M-type) PLA2 receptor, but is a very poor ligand for neuronal-type (N-type) receptors. PLA2 catalyzes the calcium-dependent hydrolysis of the 2-acyl groups in 3-sn-phosphoglycerides. The polypeptide is Phospholipase A2 OS1 (Oxyuranus scutellatus scutellatus (Australian taipan)).